The sequence spans 208 residues: Putative dioxygenase RBE_0329 (208 aa).

It belongs to the intradiol ring-cleavage dioxygenase family.

The protein is Putative dioxygenase RBE_0329 of Rickettsia bellii (strain RML369-C).